A 405-amino-acid chain; its full sequence is Tryptophan synthase beta chain (405 aa).

Lys98 is subject to N6-(pyridoxal phosphate)lysine.

The protein belongs to the TrpB family. In terms of assembly, tetramer of two alpha and two beta chains. The cofactor is pyridoxal 5'-phosphate.

The catalysed reaction is (1S,2R)-1-C-(indol-3-yl)glycerol 3-phosphate + L-serine = D-glyceraldehyde 3-phosphate + L-tryptophan + H2O. It functions in the pathway amino-acid biosynthesis; L-tryptophan biosynthesis; L-tryptophan from chorismate: step 5/5. Its function is as follows. The beta subunit is responsible for the synthesis of L-tryptophan from indole and L-serine. The chain is Tryptophan synthase beta chain from Xanthomonas campestris pv. campestris (strain 8004).